The sequence spans 555 residues: Formate--tetrahydrofolate ligase (555 aa).

An ATP-binding site is contributed by 65-72; that stretch reads TPAGEGKT.

The protein belongs to the formate--tetrahydrofolate ligase family.

The enzyme catalyses (6S)-5,6,7,8-tetrahydrofolate + formate + ATP = (6R)-10-formyltetrahydrofolate + ADP + phosphate. It functions in the pathway one-carbon metabolism; tetrahydrofolate interconversion. The protein is Formate--tetrahydrofolate ligase of Paracoccus denitrificans (strain Pd 1222).